Here is a 337-residue protein sequence, read N- to C-terminus: MQTIPIKHVGNDPLVDAFQRRYYYLRLSITDVCNFRCNYCLPNGYQPESNKPSFLTLNEIRLVVKSFANMGTEKVRITGGEPTLRKDFLPIVETIAQNPTIKQIALTTNGYRMAKDVAAWKEAGITSINVSIDSLDARMFHRITGIDKFEDVMRGLERAFEVGYQKIKVNSVLMRDLNDADFNQFLTWIKDKPIQMRFIELMQTGEMDHFFQQHHVSGQLLADKLINAGWTLQSKGLLDGPAKVFKHPDYVGEVGLIMPYEKNFCASCNRLRVSAKGKLHLCLFGEEGITLRDLLQSDDQQLQLQARISSALQGKREHHFLHQGDSGVRANLASIGG.

Residues 17 to 242 (AFQRRYYYLR…QSKGLLDGPA (226 aa)) enclose the Radical SAM core domain. A GTP-binding site is contributed by arginine 26. Positions 33 and 37 each coordinate [4Fe-4S] cluster. Tyrosine 39 provides a ligand contact to S-adenosyl-L-methionine. Residue cysteine 40 participates in [4Fe-4S] cluster binding. Arginine 76 serves as a coordination point for GTP. Glycine 80 serves as a coordination point for S-adenosyl-L-methionine. A GTP-binding site is contributed by threonine 107. Serine 131 provides a ligand contact to S-adenosyl-L-methionine. A GTP-binding site is contributed by lysine 168. Methionine 202 serves as a coordination point for S-adenosyl-L-methionine. The [4Fe-4S] cluster site is built by cysteine 265 and cysteine 268. Residue 270-272 (RLR) coordinates GTP. Cysteine 282 provides a ligand contact to [4Fe-4S] cluster.

Belongs to the radical SAM superfamily. MoaA family. As to quaternary structure, monomer and homodimer. [4Fe-4S] cluster is required as a cofactor.

The catalysed reaction is GTP + AH2 + S-adenosyl-L-methionine = (8S)-3',8-cyclo-7,8-dihydroguanosine 5'-triphosphate + 5'-deoxyadenosine + L-methionine + A + H(+). It functions in the pathway cofactor biosynthesis; molybdopterin biosynthesis. In terms of biological role, catalyzes the cyclization of GTP to (8S)-3',8-cyclo-7,8-dihydroguanosine 5'-triphosphate. This chain is GTP 3',8-cyclase, found in Pasteurella multocida (strain Pm70).